The following is a 641-amino-acid chain: Epithelial sodium channel subunit beta (641 aa).

Residues 1-50 (MHVKKYLLKCLHRLQKGPGYTYKELLVWYCDNTNTHGPKRIIREGPKKKA) are Cytoplasmic-facing. The chain crosses the membrane as a helical span at residues 51–71 (MWFLITLLFASLVCWQWGVFI). The Extracellular portion of the chain corresponds to 72–533 (KTYLSWEVSV…GGQFGFWMGG (462 aa)). Intrachain disulfides connect Cys98-Cys273, Cys185-Cys190, Cys197-Cys204, Cys250-Cys257, Cys362-Cys449, Cys387-Cys445, Cys391-Cys441, Cys400-Cys427, and Cys402-Cys416. Asn141 is a glycosylation site (N-linked (GlcNAc...) asparagine). Asn261 and Asn379 each carry an N-linked (GlcNAc...) asparagine glycan. A helical membrane pass occupies residues 534 to 554 (SVLCLIEFAEIIIDFVWITII). The Cytoplasmic portion of the chain corresponds to 555-641 (KLVALAKGLR…VESDSEGDAV (87 aa)). The interval 596–641 (GHRSPDAEAYPDEQALPIPGTPPPNYDSLRLQPLDVVESDSEGDAV) is disordered. Positions 617–621 (PPPNY) match the PY motif; recruits WW domain-containing proteins and is thereby required for ubiquitination and inhibition of the channel by NEDD4 and NEDD4L motif. The span at 632–641 (VESDSEGDAV) shows a compositional bias: acidic residues. Phosphoserine is present on residues Ser634 and Ser636.

Belongs to the amiloride-sensitive sodium channel (TC 1.A.6) family. SCNN1B subfamily. As to quaternary structure, component of the heterotrimeric epithelial sodium channel (ENaC) composed of an alpha/SCNN1A, a beta/SCNN1B and a gamma/SCNN1G subunit. Interacts with WWP1 (via WW domains). Interacts with WWP2 (via WW domains); inhibits the channel. Interacts with the full-length immature form of PCSK9 (pro-PCSK9). Interacts (N-glycosylated) with BPIFA1; the interaction is direct and inhibits the proteolytic processing of SCNN1A and SCNN1G and the activation of ENaC. In terms of processing, ubiquitinated. Can be ubiquitinated at multiple sites and undergo monoubiquitination and polyubiquitination. Ubiquitination by NEDD4 or NEDD4L inhibits the ENaC channel through endocytosis, intracellular retention and degradation of its individual subunits. However, some studies could not confirm the ubiquitination of this subunit of the ENaC. Phosphorylated on serine and threonine residues. Aldosterone and insulin increase the basal level of phosphorylation. Post-translationally, N-glycosylated. N-glycosylation is required for interaction with BPIFA1.

The protein localises to the apical cell membrane. It localises to the cytoplasmic vesicle membrane. It carries out the reaction Na(+)(in) = Na(+)(out). Originally identified and characterized by its inhibition by the diuretic drug amiloride. In terms of biological role, this is one of the three pore-forming subunits of the heterotrimeric epithelial sodium channel (ENaC), a critical regulator of sodium balance and fluid homeostasis. ENaC operates in epithelial tissues, where it mediates the electrodiffusion of sodium ions from extracellular fluid through the apical membrane of cells, with water following osmotically. It plays a key role in maintaining sodium homeostasis through electrogenic sodium reabsorption in the kidneys. Additionally, ENaC is essential for airway surface liquid homeostasis, which is crucial for proper mucus clearance. In Oryctolagus cuniculus (Rabbit), this protein is Epithelial sodium channel subunit beta.